The following is a 430-amino-acid chain: Glucose-6-phosphate isomerase (430 aa).

E284 acts as the Proton donor in catalysis. Catalysis depends on residues H305 and K420.

The protein belongs to the GPI family.

The protein localises to the cytoplasm. The enzyme catalyses alpha-D-glucose 6-phosphate = beta-D-fructose 6-phosphate. It participates in carbohydrate biosynthesis; gluconeogenesis. The protein operates within carbohydrate degradation; glycolysis; D-glyceraldehyde 3-phosphate and glycerone phosphate from D-glucose: step 2/4. In terms of biological role, catalyzes the reversible isomerization of glucose-6-phosphate to fructose-6-phosphate. This Mycoplasma pneumoniae (strain ATCC 29342 / M129 / Subtype 1) (Mycoplasmoides pneumoniae) protein is Glucose-6-phosphate isomerase.